We begin with the raw amino-acid sequence, 365 residues long: Undecaprenyl-phosphate alpha-N-acetylglucosaminyl 1-phosphate transferase (365 aa).

Helical transmembrane passes span 3-23, 45-65, 99-119, 132-152, 157-177, 187-207, 213-233, 242-262, 293-313, and 315-335; these read LLTM…FLFV, GLIP…AFLI, IRAF…GLYL, VLGP…INAF, GIDG…GILL, LWCF…LGLL, VFMG…ILLQ, INPV…IAIM, QAFV…VIGE, and LTFI…LLYG.

This sequence belongs to the glycosyltransferase 4 family. WecA subfamily. It depends on Mg(2+) as a cofactor. Mn(2+) is required as a cofactor.

Its subcellular location is the cell inner membrane. The enzyme catalyses di-trans,octa-cis-undecaprenyl phosphate + UDP-N-acetyl-alpha-D-glucosamine = N-acetyl-alpha-D-glucosaminyl-di-trans,octa-cis-undecaprenyl diphosphate + UMP. It functions in the pathway bacterial outer membrane biogenesis; LPS O-antigen biosynthesis. It participates in bacterial outer membrane biogenesis; enterobacterial common antigen biosynthesis. Functionally, catalyzes the transfer of the GlcNAc-1-phosphate moiety from UDP-GlcNAc onto the carrier lipid undecaprenyl phosphate (C55-P), yielding GlcNAc-pyrophosphoryl-undecaprenyl (GlcNAc-PP-C55). In Yersinia pestis, this protein is Undecaprenyl-phosphate alpha-N-acetylglucosaminyl 1-phosphate transferase.